A 353-amino-acid polypeptide reads, in one-letter code: Photosystem II D2 protein (353 aa).

Threonine 2 carries the N-acetylthreonine modification. A Phosphothreonine modification is found at threonine 2. A helical transmembrane segment spans residues 41 to 61; the sequence is CAYFALGGWFTGTTFVTSWYT. Histidine 118 provides a ligand contact to chlorophyll a. The chain crosses the membrane as a helical span at residues 125-141; it reads GFMLRQFELARSVQLRP. Residues glutamine 130 and asparagine 143 each contribute to the pheophytin a site. A helical membrane pass occupies residues 153 to 166; sequence VFVSVFLIYPLGQS. Histidine 198 is a chlorophyll a binding site. A helical transmembrane segment spans residues 208–228; the sequence is AALLCAIHGATVENTLFEDGD. A plastoquinone contacts are provided by histidine 215 and phenylalanine 262. Position 215 (histidine 215) interacts with Fe cation. Histidine 269 provides a ligand contact to Fe cation. A helical membrane pass occupies residues 279 to 295; that stretch reads GSWMSAIGVVGLALNLR.

Belongs to the reaction center PufL/M/PsbA/D family. As to quaternary structure, PSII is composed of 1 copy each of membrane proteins PsbA, PsbB, PsbC, PsbD, PsbE, PsbF, PsbH, PsbI, PsbJ, PsbK, PsbL, PsbM, PsbT, PsbX, PsbY, PsbZ, Psb30/Ycf12, at least 3 peripheral proteins of the oxygen-evolving complex and a large number of cofactors. It forms dimeric complexes. The D1/D2 heterodimer binds P680, chlorophylls that are the primary electron donor of PSII, and subsequent electron acceptors. It shares a non-heme iron and each subunit binds pheophytin, quinone, additional chlorophylls, carotenoids and lipids. There is also a Cl(-1) ion associated with D1 and D2, which is required for oxygen evolution. The PSII complex binds additional chlorophylls, carotenoids and specific lipids. is required as a cofactor.

It localises to the plastid. The protein resides in the chloroplast thylakoid membrane. It carries out the reaction 2 a plastoquinone + 4 hnu + 2 H2O = 2 a plastoquinol + O2. Photosystem II (PSII) is a light-driven water:plastoquinone oxidoreductase that uses light energy to abstract electrons from H(2)O, generating O(2) and a proton gradient subsequently used for ATP formation. It consists of a core antenna complex that captures photons, and an electron transfer chain that converts photonic excitation into a charge separation. The D1/D2 (PsbA/PsbD) reaction center heterodimer binds P680, the primary electron donor of PSII as well as several subsequent electron acceptors. D2 is needed for assembly of a stable PSII complex. This chain is Photosystem II D2 protein, found in Pinus koraiensis (Korean pine).